Consider the following 227-residue polypeptide: Casparian strip membrane protein 2 (227 aa).

At 1 to 59 the chain is on the cytoplasmic side; it reads MSSTSEATVIHMDGAAGKTPATAVPPPPPPAPTAPVQQQRKAGGVPFLLRSGAEGFRRC. A disordered region spans residues 17–37; that stretch reads GKTPATAVPPPPPPAPTAPVQ. Over residues 23–33 the composition is skewed to pro residues; it reads AVPPPPPPAPT. A helical membrane pass occupies residues 60–80; it reads MALLDLLLRVAAMGPTLAAAI. At 81 to 107 the chain is on the extracellular side; the sequence is STGTSDETLSVFTHYFQFRARFDDFSA. The helical transmembrane segment at 108–128 threads the bilayer; that stretch reads FTFFMVANAVAAGYLLMSLPF. At 129-149 the chain is on the cytoplasmic side; it reads SAFGVIRPKATSVRLLLLICD. The helical transmembrane segment at 150–170 threads the bilayer; the sequence is TIMVVLVTAAASAAAAIVYVA. Residues 171–197 lie on the Extracellular side of the membrane; that stretch reads HEGNRRANWVPICMQFHGFCKRTSGAV. A helical transmembrane segment spans residues 198 to 218; sequence VASFLAVLIFILLVFLGACAI. Residues 219–227 are Cytoplasmic-facing; sequence RRRHTTTKH.

Belongs to the Casparian strip membrane proteins (CASP) family. As to quaternary structure, homodimer and heterodimers.

It is found in the cell membrane. Its function is as follows. Regulates membrane-cell wall junctions and localized cell wall deposition. Required for establishment of the Casparian strip membrane domain (CSD) and the subsequent formation of Casparian strips, a cell wall modification of the root endodermis that determines an apoplastic barrier between the intraorganismal apoplasm and the extraorganismal apoplasm and prevents lateral diffusion. In Brachypodium distachyon (Purple false brome), this protein is Casparian strip membrane protein 2.